Consider the following 108-residue polypeptide: Long neurotoxin 43 (108 aa).

The signal sequence occupies residues Met-1–Thr-21. Intrachain disulfides connect Cys-24/Cys-42, Cys-35/Cys-63, Cys-48/Cys-52, Cys-67/Cys-78, and Cys-79/Cys-84.

Belongs to the three-finger toxin family. Long-chain subfamily. Type II alpha-neurotoxin sub-subfamily. Expressed by the venom gland.

The protein resides in the secreted. Its function is as follows. Binds with high affinity to muscular (alpha-1/CHRNA1) and neuronal (alpha-7/CHRNA7) nicotinic acetylcholine receptor (nAChR) and inhibits acetylcholine from binding to the receptor, thereby impairing neuromuscular and neuronal transmission. In Drysdalia coronoides (White-lipped snake), this protein is Long neurotoxin 43.